The primary structure comprises 341 residues: Anthranilate phosphoribosyltransferase (341 aa).

5-phospho-alpha-D-ribose 1-diphosphate is bound by residues glycine 79, 82-83 (GD), threonine 87, 89-92 (NIST), 107-115 (KHGNRAVSS), and serine 119. Anthranilate is bound at residue glycine 79. Serine 91 lines the Mg(2+) pocket. Asparagine 110 is a binding site for anthranilate. Position 165 (arginine 165) interacts with anthranilate. Residues aspartate 224 and glutamate 225 each coordinate Mg(2+).

It belongs to the anthranilate phosphoribosyltransferase family. In terms of assembly, homodimer. The cofactor is Mg(2+).

The enzyme catalyses N-(5-phospho-beta-D-ribosyl)anthranilate + diphosphate = 5-phospho-alpha-D-ribose 1-diphosphate + anthranilate. The protein operates within amino-acid biosynthesis; L-tryptophan biosynthesis; L-tryptophan from chorismate: step 2/5. In terms of biological role, catalyzes the transfer of the phosphoribosyl group of 5-phosphorylribose-1-pyrophosphate (PRPP) to anthranilate to yield N-(5'-phosphoribosyl)-anthranilate (PRA). This is Anthranilate phosphoribosyltransferase from Bacillus mycoides (strain KBAB4) (Bacillus weihenstephanensis).